Here is a 335-residue protein sequence, read N- to C-terminus: Biotin synthase (335 aa).

Residues 51–281 (YRVQLASLLS…RSRVRLSAGR (231 aa)) form the Radical SAM core domain. 3 residues coordinate [4Fe-4S] cluster: Cys-66, Cys-70, and Cys-73. Cys-112, Cys-144, Cys-204, and Arg-276 together coordinate [2Fe-2S] cluster.

It belongs to the radical SAM superfamily. Biotin synthase family. As to quaternary structure, homodimer. It depends on [4Fe-4S] cluster as a cofactor. Requires [2Fe-2S] cluster as cofactor.

The enzyme catalyses (4R,5S)-dethiobiotin + (sulfur carrier)-SH + 2 reduced [2Fe-2S]-[ferredoxin] + 2 S-adenosyl-L-methionine = (sulfur carrier)-H + biotin + 2 5'-deoxyadenosine + 2 L-methionine + 2 oxidized [2Fe-2S]-[ferredoxin]. It participates in cofactor biosynthesis; biotin biosynthesis; biotin from 7,8-diaminononanoate: step 2/2. Functionally, catalyzes the conversion of dethiobiotin (DTB) to biotin by the insertion of a sulfur atom into dethiobiotin via a radical-based mechanism. The chain is Biotin synthase from Prochlorococcus marinus (strain MIT 9303).